A 557-amino-acid chain; its full sequence is Eukaryotic translation initiation factor 3 subunit D-2 (557 aa).

Residues 292–306 (QFDMLTVNETALEPP) form an RNA gate region. The segment at 533 to 557 (FDSDNNDGEETSDDRPFLNSKDNKL) is disordered. A compositionally biased stretch (basic and acidic residues) spans 545 to 557 (DDRPFLNSKDNKL).

This sequence belongs to the eIF-3 subunit D family. As to quaternary structure, component of the eukaryotic translation initiation factor 3 (eIF-3) complex. The eIF-3 complex interacts with pix.

The protein localises to the cytoplasm. In terms of biological role, mRNA cap-binding component of the eukaryotic translation initiation factor 3 (eIF-3) complex, which is involved in protein synthesis of a specialized repertoire of mRNAs and, together with other initiation factors, stimulates binding of mRNA and methionyl-tRNAi to the 40S ribosome. The eIF-3 complex specifically targets and initiates translation of a subset of mRNAs involved in cell proliferation. In the eIF-3 complex, eif3d specifically recognizes and binds the 7-methylguanosine cap of a subset of mRNAs. The sequence is that of Eukaryotic translation initiation factor 3 subunit D-2 from Drosophila grimshawi (Hawaiian fruit fly).